The primary structure comprises 140 residues: DPNVAFYSVVAVICWQYIPFYMIFFIAALSNIPQELYEAAKIDGATQGQYFWRIELPLLTPSIKTACILSLIGSLKYFDLIYVMTEGGPSNATELMATYMYKNAFASFKMGYGSTIASAMFLIITTAGIFAYFVTRRKEE.

The region spanning 1-133 (DPNVAFYSVV…ITTAGIFAYF (133 aa)) is the ABC transmembrane type-1 domain. The next 3 membrane-spanning stretches (helical) occupy residues 9–29 (VVAV…IAAL), 65–85 (TACI…YVMT), and 115–135 (TIAS…YFVT).

This sequence belongs to the binding-protein-dependent transport system permease family. MalFG subfamily.

Its subcellular location is the cell membrane. Functionally, may play a role in sugar transport. This is Putative ABC transporter permease protein ORF1 from Caldicellulosiruptor sp. (strain Rt8B.4).